Consider the following 427-residue polypeptide: Glutamate-1-semialdehyde 2,1-aminomutase (427 aa).

Residue Lys-265 is modified to N6-(pyridoxal phosphate)lysine.

Belongs to the class-III pyridoxal-phosphate-dependent aminotransferase family. HemL subfamily. Homodimer. Requires pyridoxal 5'-phosphate as cofactor.

It is found in the cytoplasm. It carries out the reaction (S)-4-amino-5-oxopentanoate = 5-aminolevulinate. Its pathway is porphyrin-containing compound metabolism; protoporphyrin-IX biosynthesis; 5-aminolevulinate from L-glutamyl-tRNA(Glu): step 2/2. The chain is Glutamate-1-semialdehyde 2,1-aminomutase from Burkholderia pseudomallei (strain 1710b).